Here is a 375-residue protein sequence, read N- to C-terminus: Putative actin-26 (375 aa).

This sequence belongs to the actin family.

It localises to the cytoplasm. The protein resides in the cytoskeleton. The catalysed reaction is ATP + H2O = ADP + phosphate + H(+). Actins are highly conserved proteins that are involved in various types of cell motility and are ubiquitously expressed in all eukaryotic cells. Multiple isoforms are involved in various cellular functions such as cytoskeleton structure, cell mobility, chromosome movement and muscle contraction. In Dictyostelium discoideum (Social amoeba), this protein is Putative actin-26 (act26).